We begin with the raw amino-acid sequence, 482 residues long: MPPSPLDDRVVVALSRPVRPQDLNLCLDSSYLGSAAPGSTSHPPVIATTVVSLKAANLTYMPSSSGSARSLNCGCSSASCCTVATYDKDNQAPTQAIAAGTATTAIGSSTTCPASQMVNNSENAGSLSPSGGVGSPMAGTPKQLASIKIIYPNDLAKKMTKCSKSHLPSQGPVIIDCRPFMEYNKSHIQGAVHINCADKISRRRLQQGKITVLDLISCREGKDSFKRIFSKEIIVYDENTNEPSRVVPSQPLHIVLESLKREGKEPLVLKGGLSSFKQNHENLCDNSLQLQECREVGGGASAASSMLPQSIPSTPDIENAELTPILPFLFLGNEQDAQDLETMQRLNIGYVINVTTHLPLYHYEKGLFNYKRLPATDSNKQNLRQYFEEAFEFIEEAHQCGKGLLIHCQAGVSRSATIVIAYLMKHTRMTMTDAYKFVKGKRPIISPNLNFMGQLLEFEEDLNNGVTPRILTPKLMGVETVV.

The Rhodanese domain maps to 168-285 (PSQGPVIIDC…FKQNHENLCD (118 aa)). The segment at 199 to 215 (KISRRRLQQGKITVLDL) is interaction with MAP kinases. Residues 321 to 464 (ELTPILPFLF…LLEFEEDLNN (144 aa)) form the Tyrosine-protein phosphatase domain. Cysteine 408 acts as the Phosphocysteine intermediate in catalysis.

This sequence belongs to the protein-tyrosine phosphatase family. Non-receptor class dual specificity subfamily. In terms of assembly, monomer. Interacts with MAPK14.

The protein resides in the cytoplasm. The protein localises to the nucleus. The catalysed reaction is O-phospho-L-tyrosyl-[protein] + H2O = L-tyrosyl-[protein] + phosphate. It carries out the reaction O-phospho-L-seryl-[protein] + H2O = L-seryl-[protein] + phosphate. The enzyme catalyses O-phospho-L-threonyl-[protein] + H2O = L-threonyl-[protein] + phosphate. Its function is as follows. Protein phosphatase involved in the inactivation of MAP kinases. Has a specificity for the MAPK11/MAPK12/MAPK13/MAPK14 subfamily. It preferably dephosphorylates p38. The protein is Dual specificity protein phosphatase 10 (DUSP10) of Bos taurus (Bovine).